A 161-amino-acid chain; its full sequence is Ubiquitin D (161 aa).

2 consecutive Ubiquitin-like domains span residues serine 3–valine 77 and leucine 86–isoleucine 159.

This sequence belongs to the ubiquitin D family. In terms of assembly, interacts directly with the 26S proteasome. Interacts with NUB1; this interaction facilitates the linking of UBD-conjugated target protein to the proteasome complex and accelerates its own degradation and that of its conjugates. Interacts (via ubiquitin-like 1 domain) with the spindle checkpoint protein MAD2L1 during mitosis. Present in aggresomes of proteasome inhibited cells. Interacts with HDAC6 under proteasome impairment conditions. Forms a thioester with UBA6 in cells stimulated with tumor necrosis factor-alpha (TNFa) and interferon-gamma (IFNg). Interacts with SQSTM1 and TP53/p53. Post-translationally, can be acetylated.

Its subcellular location is the nucleus. It localises to the cytoplasm. Functionally, ubiquitin-like protein modifier which can be covalently attached to target proteins and subsequently leads to their degradation by the 26S proteasome, in a NUB1-dependent manner. Conjugation to the target protein is activated by UBA6 via adenylation of its C-terminal glycine. Probably functions as a survival factor. Promotes the expression of the proteasome subunit beta type-9 (PSMB9/LMP2). Regulates TNF-alpha-induced and LPS-mediated activation of the central mediator of innate immunity NF-kappa-B by promoting TNF-alpha-mediated proteasomal degradation of ubiquitinated-I-kappa-B-alpha. Required for TNF-alpha-induced p65 nuclear translocation in renal tubular epithelial cells (RTECs). May be involved in dendritic cell (DC) maturation, the process by which immature dendritic cells differentiate into fully competent antigen-presenting cells that initiate T-cell responses. Mediates mitotic non-disjunction and chromosome instability, in long-term in vitro culture and cancers, by abbreviating mitotic phase and impairing the kinetochore localization of MAD2L1 during the prometaphase stage of the cell cycle. May be involved in the formation of aggresomes when proteasome is saturated or impaired. Mediates apoptosis in a caspase-dependent manner, especially in renal epithelium and tubular cells during renal diseases. This Rattus norvegicus (Rat) protein is Ubiquitin D (Ubd).